The sequence spans 509 residues: Cysteine--tRNA ligase (509 aa).

A Zn(2+)-binding site is contributed by Cys19. The 'HIGH' region motif lies at 21-31; the sequence is PTVYNDAHIGH. Residues Cys213, His238, and Glu242 each contribute to the Zn(2+) site. The 'KMSKS' region signature appears at 284 to 288; it reads KMSKS. Position 287 (Lys287) interacts with ATP.

It belongs to the class-I aminoacyl-tRNA synthetase family. It depends on Zn(2+) as a cofactor.

The enzyme catalyses tRNA(Cys) + L-cysteine + ATP = L-cysteinyl-tRNA(Cys) + AMP + diphosphate. The protein is Cysteine--tRNA ligase (CARS) of Acanthamoeba polyphaga (Amoeba).